The chain runs to 788 residues: Bifunctional purine biosynthetic protein ADE1 (788 aa).

The interval 1-429 (MSLRILLVGN…NRKDIAYKAF (429 aa)) is GARS. In terms of domain architecture, ATP-grasp spans 114–323 (KDFMKKHNIP…LAEVMLACVE (210 aa)). Position 140–201 (140–201 (VKKVGHRVVI…EEFLEGDELS (62 aa))) interacts with ATP. Positions 291 and 293 each coordinate Mg(2+). Residues 439–752 (ITYAQAGVSI…VVKQEKVAEV (314 aa)) are AIRS.

The protein in the N-terminal section; belongs to the GARS family. It in the C-terminal section; belongs to the AIR synthase family. Requires Mg(2+) as cofactor. Mn(2+) serves as cofactor.

It localises to the cytoplasm. The protein localises to the cytosol. It catalyses the reaction 5-phospho-beta-D-ribosylamine + glycine + ATP = N(1)-(5-phospho-beta-D-ribosyl)glycinamide + ADP + phosphate + H(+). The enzyme catalyses 2-formamido-N(1)-(5-O-phospho-beta-D-ribosyl)acetamidine + ATP = 5-amino-1-(5-phospho-beta-D-ribosyl)imidazole + ADP + phosphate + H(+). It participates in purine metabolism; IMP biosynthesis via de novo pathway; 5-amino-1-(5-phospho-D-ribosyl)imidazole from N(2)-formyl-N(1)-(5-phospho-D-ribosyl)glycinamide: step 2/2. It functions in the pathway purine metabolism; IMP biosynthesis via de novo pathway; N(1)-(5-phospho-D-ribosyl)glycinamide from 5-phospho-alpha-D-ribose 1-diphosphate: step 2/2. Catalyzes the second and fifth step in the 'de novo' purine biosynthesis pathway; contains phosphoribosylamine--glycine ligase (GARS) and phosphoribosylformylglycinamidine cyclo-ligase (AIRS) activities. This chain is Bifunctional purine biosynthetic protein ADE1, found in Yarrowia lipolytica (strain CLIB 122 / E 150) (Yeast).